A 213-amino-acid polypeptide reads, in one-letter code: Small ribosomal subunit protein uS3 (213 aa).

The region spanning 38–106 (IRKYVKKTLY…EFSIEVNEIR (69 aa)) is the KH type-2 domain.

Belongs to the universal ribosomal protein uS3 family. In terms of assembly, part of the 30S ribosomal subunit. Forms a tight complex with proteins S10 and S14.

In terms of biological role, binds the lower part of the 30S subunit head. Binds mRNA in the 70S ribosome, positioning it for translation. This is Small ribosomal subunit protein uS3 from Oleidesulfovibrio alaskensis (strain ATCC BAA-1058 / DSM 17464 / G20) (Desulfovibrio alaskensis).